We begin with the raw amino-acid sequence, 260 residues long: Triosephosphate isomerase (260 aa).

Residue 11–13 (NWK) coordinates substrate. The active-site Electrophile is the H103. The Proton acceptor role is filled by E175. Substrate is bound by residues G181, S220, and 241–242 (GG).

Belongs to the triosephosphate isomerase family. In terms of assembly, homodimer.

Its subcellular location is the cytoplasm. It catalyses the reaction D-glyceraldehyde 3-phosphate = dihydroxyacetone phosphate. Its pathway is carbohydrate biosynthesis; gluconeogenesis. The protein operates within carbohydrate degradation; glycolysis; D-glyceraldehyde 3-phosphate from glycerone phosphate: step 1/1. Its function is as follows. Involved in the gluconeogenesis. Catalyzes stereospecifically the conversion of dihydroxyacetone phosphate (DHAP) to D-glyceraldehyde-3-phosphate (G3P). The polypeptide is Triosephosphate isomerase (Shewanella halifaxensis (strain HAW-EB4)).